Consider the following 429-residue polypeptide: Enolase (429 aa).

Glutamine 164 lines the (2R)-2-phosphoglycerate pocket. The Proton donor role is filled by glutamate 206. Residues aspartate 243, glutamate 286, and aspartate 313 each coordinate Mg(2+). Residues lysine 338, arginine 367, serine 368, and lysine 389 each coordinate (2R)-2-phosphoglycerate. Lysine 338 functions as the Proton acceptor in the catalytic mechanism.

Belongs to the enolase family. Mg(2+) serves as cofactor.

The protein resides in the cytoplasm. The protein localises to the secreted. Its subcellular location is the cell surface. The enzyme catalyses (2R)-2-phosphoglycerate = phosphoenolpyruvate + H2O. Its pathway is carbohydrate degradation; glycolysis; pyruvate from D-glyceraldehyde 3-phosphate: step 4/5. Catalyzes the reversible conversion of 2-phosphoglycerate (2-PG) into phosphoenolpyruvate (PEP). It is essential for the degradation of carbohydrates via glycolysis. In Thermotoga sp. (strain RQ2), this protein is Enolase.